Here is a 437-residue protein sequence, read N- to C-terminus: Interactor protein for cytohesin exchange factors 1 (437 aa).

A PH domain is found at 41-140 (HADCQGWLYK…WLNKLGSAVI (100 aa)). 2 disordered regions span residues 143-225 (ESTT…PDTV) and 273-307 (LSSDDTSSLSSNHDHLTVPDKPAGSKIMDKEETKV). The segment covering 151-162 (CYSESEQEDPEI) has biased composition (acidic residues). The segment covering 172–200 (ASQTQSLTAQQASSSSPSLSGTSYSFSSL) has biased composition (low complexity). The span at 201–214 (ENTVKTPSSFPSSL) shows a compositional bias: polar residues. The segment covering 273–283 (LSSDDTSSLSS) has biased composition (low complexity). CRAC domain regions lie at residues 315–320 (KLYKSL) and 339–348 (LRKSFVKRCK). The tract at residues 389–437 (KYREWKVMNTLLIQDIYQQQRASPAPDDTDDTPQELKKSPSSPSVENSI) is required for interaction with CYTH2. The disordered stretch occupies residues 406-437 (QQQRASPAPDDTDDTPQELKKSPSSPSVENSI). A Phosphoserine modification is found at Ser411. Residues 427 to 437 (SPSSPSVENSI) show a composition bias toward polar residues.

In terms of assembly, interacts with guanine-nucleotide exchange factors PSCD1, PSCD2, PSCD3 and PSCD4. Interacts (via C-terminus) with cytohesin-2 CYTH2.

It localises to the cytoplasm. The protein resides in the cell membrane. Enhances the promotion of guanine-nucleotide exchange by PSCD2 on ARF6 in a concentration-dependent manner. This Homo sapiens (Human) protein is Interactor protein for cytohesin exchange factors 1 (IPCEF1).